The sequence spans 406 residues: Putative cfxQ-like protein R730 (406 aa).

A disordered region spans residues 1 to 37 (MKRSHDSITRSINSDNDSETNMNSDNNNNNKPNQRKK). Low complexity predominate over residues 13–32 (NSDNDSETNMNSDNNNNNKP). 173–180 (GPPGVGKS) lines the ATP pocket.

It belongs to the CbxX/CfxQ family.

This chain is Putative cfxQ-like protein R730, found in Acanthamoeba polyphaga mimivirus (APMV).